The primary structure comprises 344 residues: Glycerol-3-phosphate dehydrogenase [NAD(P)+] (344 aa).

The NADPH site is built by serine 23, tryptophan 24, arginine 44, and lysine 118. Sn-glycerol 3-phosphate contacts are provided by lysine 118, glycine 147, and threonine 149. Alanine 151 is an NADPH binding site. Sn-glycerol 3-phosphate-binding residues include lysine 202, aspartate 255, serine 265, arginine 266, and asparagine 267. Lysine 202 acts as the Proton acceptor in catalysis. Residue arginine 266 participates in NADPH binding. Glutamate 292 lines the NADPH pocket.

It belongs to the NAD-dependent glycerol-3-phosphate dehydrogenase family.

It localises to the cytoplasm. It catalyses the reaction sn-glycerol 3-phosphate + NAD(+) = dihydroxyacetone phosphate + NADH + H(+). The catalysed reaction is sn-glycerol 3-phosphate + NADP(+) = dihydroxyacetone phosphate + NADPH + H(+). It functions in the pathway membrane lipid metabolism; glycerophospholipid metabolism. Catalyzes the reduction of the glycolytic intermediate dihydroxyacetone phosphate (DHAP) to sn-glycerol 3-phosphate (G3P), the key precursor for phospholipid synthesis. The protein is Glycerol-3-phosphate dehydrogenase [NAD(P)+] of Nitrosococcus oceani (strain ATCC 19707 / BCRC 17464 / JCM 30415 / NCIMB 11848 / C-107).